The chain runs to 238 residues: Nuclear transcription factor Y subunit B-9 (238 aa).

The DNA-binding element occupies Met-64–Ile-70. Positions Ile-91–Val-102 are subunit association domain (SAD). Residues Arg-203–Lys-238 are disordered. Residues Gly-208–Gly-227 show a composition bias toward low complexity.

The protein belongs to the NFYB/HAP3 subunit family. As to quaternary structure, heterotrimeric transcription factor composed of three components, NF-YA, NF-YB and NF-YC. NF-YB and NF-YC must interact and dimerize for NF-YA association and DNA binding. Interacts with PRN1. As to expression, expressed in green siliques. Present in etiolated seedlings.

It is found in the nucleus. In terms of biological role, component of the NF-Y/HAP transcription factor complex. The NF-Y complex stimulates the transcription of various genes by recognizing and binding to a CCAAT motif in promoters. Acts as a central regulator of the embryogenesis. Required for the speciation of cotyledon identity and the completion of embryo maturation. Controls seed storage protein genes through the regulation of FUS3 and ABI3. Involved in the blue light (BL) and abscisic acid (ABA) signaling pathways. In Arabidopsis thaliana (Mouse-ear cress), this protein is Nuclear transcription factor Y subunit B-9 (NFYB9).